We begin with the raw amino-acid sequence, 96 residues long: MKIRPLHDRVIVRRMEEEKTSSGGIVIPDTAAEKPIRGEVVAVGNGKILESGEVRALDVKVGDKVLFGKYSGTDVKVESEELLVMREDDIMAVLEG.

Belongs to the GroES chaperonin family. As to quaternary structure, heptamer of 7 subunits arranged in a ring. Interacts with the chaperonin GroEL.

It localises to the cytoplasm. Its function is as follows. Together with the chaperonin GroEL, plays an essential role in assisting protein folding. The GroEL-GroES system forms a nano-cage that allows encapsulation of the non-native substrate proteins and provides a physical environment optimized to promote and accelerate protein folding. GroES binds to the apical surface of the GroEL ring, thereby capping the opening of the GroEL channel. This Nitrosococcus oceani (strain ATCC 19707 / BCRC 17464 / JCM 30415 / NCIMB 11848 / C-107) protein is Co-chaperonin GroES.